The sequence spans 1179 residues: Protein FAM83H (1179 aa).

A DUF1669 region spans residues 1 to 286 (MARRSQSSSQ…LFAQSEPLVP (286 aa)). Residues 1–286 (MARRSQSSSQ…LFAQSEPLVP (286 aa)) are mediates interaction with CSNK1A1 and is required for FAM83H activity in keratin cytoskeleton organization. Thr-465 is modified (phosphothreonine). Disordered regions lie at residues 484–577 (ADPD…GRAG) and 636–669 (FPTK…DSFR). 6 positions are modified to phosphoserine: Ser-513, Ser-514, Ser-516, Ser-523, Ser-647, and Ser-667. Phosphothreonine is present on Thr-756. Phosphoserine is present on residues Ser-759, Ser-785, and Ser-813. The tract at residues 830–1026 (RLPSRFLSAQ…RGPRARLSSA (197 aa)) is disordered. Positions 836-847 (LSAQSHSTSPQG) are enriched in polar residues. 2 positions are modified to phosphoserine: Ser-870 and Ser-881. Residue Thr-883 is modified to Phosphothreonine. Residues 884-906 (PGFSTRRGSPTTGFIEQKGSPTS) are compositionally biased toward polar residues. A Phosphoserine modification is found at Ser-892. Thr-894 bears the Phosphothreonine mark. A phosphoserine mark is found at Ser-903, Ser-914, Ser-925, Ser-936, Ser-945, Ser-1003, Ser-1009, Ser-1024, and Ser-1025. Phosphothreonine is present on Thr-1040. Disordered regions lie at residues 1047–1084 (ISAH…APDM) and 1143–1165 (EEAS…SKVG). Phosphoserine is present on residues Ser-1048, Ser-1068, and Ser-1147.

Belongs to the FAM83 family. As to quaternary structure, directly interacts (via DUF1669) with casein kinase isoforms CSNK1A1, CSNK1A1L, CSNK1D and CSNK1E. Interaction with CSNK1A1 recruits CSNK1A1 to keratin filaments. Interacts with KRT18 and probably other keratins. In terms of tissue distribution, expressed in the tooth follicle.

It localises to the cytoplasm. Its subcellular location is the cytoskeleton. May play a major role in the structural organization and calcification of developing enamel. May play a role in keratin cytoskeleton disassembly by recruiting CSNK1A1 to keratin filaments. Thereby, it may regulate epithelial cell migration. This Homo sapiens (Human) protein is Protein FAM83H.